The sequence spans 607 residues: Frizzled and smoothened-like protein J (607 aa).

Residues M1–S26 form the signal peptide. The Extracellular segment spans residues Q27–D247. Residues D32 to T182 enclose the FZ domain. 3 cysteine pairs are disulfide-bonded: C37/C108, C50/C101, and C127/C179. N-linked (GlcNAc...) asparagine glycans are attached at residues N63, N133, N155, N164, N190, and N222. Residues V248 to N268 traverse the membrane as a helical segment. Residues P269–K276 lie on the Cytoplasmic side of the membrane. The chain crosses the membrane as a helical span at residues I277–F297. N298 carries N-linked (GlcNAc...) asparagine glycosylation. The Extracellular segment spans residues N298–S330. A helical transmembrane segment spans residues L331–V351. The Cytoplasmic portion of the chain corresponds to G352 to R358. The helical transmembrane segment at F359–S379 threads the bilayer. Residues K380–R401 are Extracellular-facing. A helical transmembrane segment spans residues F402 to L422. The Cytoplasmic portion of the chain corresponds to M423–P451. The helical transmembrane segment at I452–I472 threads the bilayer. The Extracellular portion of the chain corresponds to N473–G508. The chain crosses the membrane as a helical span at residues L509 to I529. The Cytoplasmic portion of the chain corresponds to S530–L607. The Lys-Thr-X-X-X-Trp motif, mediates interaction with the PDZ domain of Dvl family members motif lies at K532–W537. The segment covering T559–S575 has biased composition (low complexity). The segment at T559–L607 is disordered. Positions G593–L607 are enriched in polar residues.

It belongs to the G-protein coupled receptor Fz/Smo family.

The protein resides in the membrane. The sequence is that of Frizzled and smoothened-like protein J (fslJ-1) from Dictyostelium discoideum (Social amoeba).